Here is a 775-residue protein sequence, read N- to C-terminus: Dipeptidyl peptidase 4 (775 aa).

Positions 1 to 15 (MKFLSLLLLVGVAQA) are cleaved as a signal peptide. N-linked (GlcNAc...) asparagine glycosylation is found at asparagine 81, asparagine 111, and asparagine 219. Active-site charge relay system residues include serine 613, aspartate 690, and histidine 725. Residue asparagine 731 is glycosylated (N-linked (GlcNAc...) asparagine).

The protein belongs to the peptidase S9B family.

The protein localises to the secreted. It carries out the reaction Release of an N-terminal dipeptide, Xaa-Yaa-|-Zaa-, from a polypeptide, preferentially when Yaa is Pro, provided Zaa is neither Pro nor hydroxyproline.. Its function is as follows. Extracellular dipeptidyl-peptidase which removes N-terminal dipeptides sequentially from polypeptides having unsubstituted N-termini provided that the penultimate residue is proline. Contributes to pathogenicity. The chain is Dipeptidyl peptidase 4 (DPP4) from Arthroderma otae (strain ATCC MYA-4605 / CBS 113480) (Microsporum canis).